The following is a 385-amino-acid chain: UPF0284 protein A9601_04941 (385 aa).

This sequence belongs to the UPF0284 family.

The chain is UPF0284 protein A9601_04941 from Prochlorococcus marinus (strain AS9601).